A 716-amino-acid chain; its full sequence is MSQVMSSPLLAGGPAVGLAPCEEPRRVLHPAPSPSLPPPCPYYTTEGWGAQALMAPMPCKGPPGRLQPAPQAGANASCLLKAPGEQVSGAQEDLDSYIDFSLESLNQMILELDPTFQLLPPGPGGPEAQPTQSTTLGKKKEEPEALDIKYIEVTSTRSRCHDGPRSCCSPSVTPPFGSPRTGGLLLSRDLPRETRSSSESLIFSGSQGRGHQHPAPPSAVPSSHPPTSPSISIPGMGSKASGPHGLGSPLVASPSLEKGLGGQGPQLSSRVSMLSGSPASDISYVFGSSQSLLHSSISSHQSSSRSLESPSSSSSSLNNLGPVSLYTRASDLQVPSNATPSMGQPRATRSPPLAKEHASSCPPSITNSMTDIPIVLINGFPEPGSPPSQRTPGPQDFVRPGATSSSMPCPATRSHSQTLPEAPPTASPEGPARDMQPTMKFVMDTSKYWFKPSISREQAIELLRKEEPGAFIVRDSSSYRGSFGLALKVQEAPTPAQSRPGEDSSDLIRHFLIESSAKGVHLKGADEEPYFGSLSAFVCQHSIMALALPCKLVIPQKELGGGDGASDPSADGQASCLKKSAGCHALYLSSVSVETLSGALAVEKAISATLERDVLPTPTVVHFKVTEQGITLTDVQRKVFFRRHYPLATLRFCGMDPEQRKWQKYCKPSRIFGFVAKSQTESQENVCHLFAEYDTLQPASQVIRLVGALLQDPERM.

The N-terminal stretch at 1 to 17 (MSQVMSSPLLAGGPAVG) is a signal peptide. 4 disordered regions span residues 119–274 (LPPG…VSML), 301–322 (QSSS…NLGP), 334–366 (VPSN…PSIT), and 379–436 (GFPE…RDMQ). Over residues 138–150 (KKKEEPEALDIKY) the composition is skewed to basic and acidic residues. The span at 197 to 206 (SSESLIFSGS) shows a compositional bias: polar residues. Residues 214–228 (PAPPSAVPSSHPPTS) are compositionally biased toward pro residues. Residue serine 248 is modified to Phosphoserine. Residues 265–274 (PQLSSRVSML) show a composition bias toward polar residues. Residues 402–419 (ATSSSMPCPATRSHSQTL) are compositionally biased toward polar residues. The 108-residue stretch at 449 to 556 (WFKPSISREQ…ALPCKLVIPQ (108 aa)) folds into the SH2 domain. One can recognise a PTB domain in the interval 583-704 (CHALYLSSVS…TLQPASQVIR (122 aa)).

This sequence belongs to the PTEN phosphatase protein family. As to quaternary structure, interacts (via SH2 domain) with Rho GTPase-activating protein DLC1 (via C-terminus); the interaction is independent of DLC1 tyrosine phosphorylation. Interacts with integrin ITGB1; the interaction displaces tensin TNS3 from the ITGB1 cytoplasmic tail and promotes ITGB1 stability. Interacts (via SH2 domain) with E3 ubiquitin-protein ligase CBL (phosphorylated on 'Tyr-782'); the interaction is enhanced in the presence of EGF and reduces interaction of CBL with EGFR. Interacts (via SH2 domain) with receptor tyrosine kinase MET (when phosphorylated); the interaction increases MET protein stability.

It is found in the cell junction. The protein localises to the focal adhesion. It localises to the cytoplasm. The protein resides in the cytoskeleton. Functionally, promotes EGF-induced cell migration by displacing tensin TNS3 from the cytoplasmic tail of integrin ITGB1 which results in dissociation of TNS3 from focal adhesions, disassembly of actin stress fibers and initiation of cell migration. Suppresses ligand-induced degradation of EGFR by reducing EGFR ubiquitination in the presence of EGF. Increases MET protein stability by inhibiting MET endocytosis and subsequent lysosomal degradation which leads to increased cell survival, proliferation and migration. The polypeptide is Tensin-4 (TNS4) (Bos taurus (Bovine)).